The chain runs to 451 residues: Putative gluconeogenesis factor (451 aa).

Belongs to the gluconeogenesis factor family.

Its subcellular location is the cytoplasm. In terms of biological role, required for morphogenesis under gluconeogenic growth conditions. The chain is Putative gluconeogenesis factor from Clostridium acetobutylicum (strain ATCC 824 / DSM 792 / JCM 1419 / IAM 19013 / LMG 5710 / NBRC 13948 / NRRL B-527 / VKM B-1787 / 2291 / W).